The chain runs to 151 residues: Deoxyuridine 5'-triphosphate nucleotidohydrolase (151 aa).

Residues 70-72 (RSG), asparagine 83, 87-89 (LID), and methionine 97 each bind substrate.

Belongs to the dUTPase family. Mg(2+) is required as a cofactor.

It catalyses the reaction dUTP + H2O = dUMP + diphosphate + H(+). It functions in the pathway pyrimidine metabolism; dUMP biosynthesis; dUMP from dCTP (dUTP route): step 2/2. Its function is as follows. This enzyme is involved in nucleotide metabolism: it produces dUMP, the immediate precursor of thymidine nucleotides and it decreases the intracellular concentration of dUTP so that uracil cannot be incorporated into DNA. In Shigella sonnei (strain Ss046), this protein is Deoxyuridine 5'-triphosphate nucleotidohydrolase.